Consider the following 938-residue polypeptide: Isoleucine--tRNA ligase (938 aa).

The 'HIGH' region signature appears at Pro58 to His68. Glu561 contacts L-isoleucyl-5'-AMP. A 'KMSKS' region motif is present at residues Lys602–Ser606. An ATP-binding site is contributed by Lys605. The Zn(2+) site is built by Cys901, Cys904, Cys921, and Cys924.

Belongs to the class-I aminoacyl-tRNA synthetase family. IleS type 1 subfamily. Monomer. The cofactor is Zn(2+).

It localises to the cytoplasm. The enzyme catalyses tRNA(Ile) + L-isoleucine + ATP = L-isoleucyl-tRNA(Ile) + AMP + diphosphate. Its function is as follows. Catalyzes the attachment of isoleucine to tRNA(Ile). As IleRS can inadvertently accommodate and process structurally similar amino acids such as valine, to avoid such errors it has two additional distinct tRNA(Ile)-dependent editing activities. One activity is designated as 'pretransfer' editing and involves the hydrolysis of activated Val-AMP. The other activity is designated 'posttransfer' editing and involves deacylation of mischarged Val-tRNA(Ile). The polypeptide is Isoleucine--tRNA ligase (Yersinia enterocolitica serotype O:8 / biotype 1B (strain NCTC 13174 / 8081)).